The chain runs to 502 residues: Glycerol kinase (502 aa).

Residue Thr-14 participates in ADP binding. Positions 14, 15, and 16 each coordinate ATP. A sn-glycerol 3-phosphate-binding site is contributed by Thr-14. Arg-18 serves as a coordination point for ADP. Residues Arg-84, Glu-85, Tyr-136, and Asp-246 each coordinate sn-glycerol 3-phosphate. Glycerol-binding residues include Arg-84, Glu-85, Tyr-136, Asp-246, and Gln-247. ADP-binding residues include Thr-268 and Gly-311. The ATP site is built by Thr-268, Gly-311, Gln-315, and Gly-412. Residues Gly-412 and Asn-416 each contribute to the ADP site.

The protein belongs to the FGGY kinase family. Homotetramer and homodimer (in equilibrium). Heterodimer with EIIA-Glc. Binds 1 zinc ion per glycerol kinase EIIA-Glc dimer. The zinc ion is important for dimerization.

The enzyme catalyses glycerol + ATP = sn-glycerol 3-phosphate + ADP + H(+). It participates in polyol metabolism; glycerol degradation via glycerol kinase pathway; sn-glycerol 3-phosphate from glycerol: step 1/1. Activity of this regulatory enzyme is affected by several metabolites. Allosterically and non-competitively inhibited by fructose 1,6-bisphosphate (FBP) and unphosphorylated phosphocarrier protein EIIA-Glc (III-Glc), an integral component of the bacterial phosphotransferase (PTS) system. Functionally, key enzyme in the regulation of glycerol uptake and metabolism. Catalyzes the phosphorylation of glycerol to yield sn-glycerol 3-phosphate. This is Glycerol kinase from Escherichia coli (strain ATCC 8739 / DSM 1576 / NBRC 3972 / NCIMB 8545 / WDCM 00012 / Crooks).